The primary structure comprises 122 residues: Large ribosomal subunit protein uL14 (122 aa).

It belongs to the universal ribosomal protein uL14 family. Part of the 50S ribosomal subunit. Forms a cluster with proteins L3 and L19. In the 70S ribosome, L14 and L19 interact and together make contacts with the 16S rRNA in bridges B5 and B8.

Functionally, binds to 23S rRNA. Forms part of two intersubunit bridges in the 70S ribosome. This is Large ribosomal subunit protein uL14 from Lawsonia intracellularis (strain PHE/MN1-00).